A 1887-amino-acid polypeptide reads, in one-letter code: DNA-directed RNA polymerase II subunit RPB1 (1887 aa).

The Zn(2+) site is built by C67, C70, C77, H80, C107, C110, C150, and C176. The disordered stretch occupies residues 156–178 (MDLTKENQQPDPNKKPGHGGCGH). D487, D489, and D491 together coordinate Mg(2+). Residues 825-837 (PSEFYFHAMGGRE) form a bridging helix region. K1260 is covalently cross-linked (Glycyl lysine isopeptide (Lys-Gly) (interchain with G-Cter in ubiquitin)). Disordered regions lie at residues 1528-1565 (TPGG…GPSM) and 1579-1887 (YSPT…ESED). Low complexity-rich tracts occupy residues 1529–1565 (PGGP…GPSM), 1579–1610 (YSPT…PTSP), and 1626–1650 (PQST…PTVQ). The stretch at 1579–1585 (YSPTSPN) is repeat 1. Residues 1579-1881 (YSPTSPNYTA…SPAYSPSSPT (303 aa)) are C-terminal domain (CTD); 32 X 7 AA approximate tandem repeats of Y-[ST]-P-[STNVAPGN]-[STGMA]-[PSTR]-[SNAGCQKTLRIMH]. The 2; approximate repeat unit spans residues 1586 to 1592 (YTASSPG). 4 tandem repeats follow at residues 1598-1604 (YSPSSPN), 1605-1611 (YSPTSPL), 1631-1637 (YSPSSSG), and 1638-1644 (YSPTSPV). A compositionally biased stretch (polar residues) spans 1651–1664 (FQSSPSFAGSGSNI). A compositionally biased stretch (low complexity) spans 1665–1760 (YSPGNAYSPS…GVKYSPTSPT (96 aa)). Tandem repeats lie at residues 1671–1677 (YSPSSSN), 1678–1684 (YSPNSPS), 1685–1691 (YSPTSPS), 1692–1698 (YSPSSPS), 1699–1705 (YSPTSPC), 1706–1712 (YSPTSPS), 1713–1719 (YSPTSPN), 1720–1726 (YTPVTPS), 1727–1733 (YSPTSPN), 1740–1746 (YSPASPA), 1754–1760 (YSPTSPT), 1761–1767 (YSPPSPS), 1777–1783 (YTPGSPQ), 1784–1790 (YSPASPK), 1791–1797 (YSPTSPL), 1798–1804 (YSPSSPQ), and 1811–1817 (YSPTGST). The segment covering 1776–1786 (QYTPGSPQYSP) has biased composition (polar residues). Low complexity predominate over residues 1788–1813 (SPKYSPTSPLYSPSSPQHSPSNQYSP). The segment covering 1814 to 1831 (TGSTYSATSPRYSPNMSI) has biased composition (polar residues). One copy of the 24; approximate repeat lies at 1818–1824 (YSATSPR). Tandem repeats lie at residues 1825-1831 (YSPNMSI), 1832-1838 (YSPSSTK), 1839-1845 (YSPTSPT), 1846-1852 (YTPTARN), 1853-1859 (YSPTSPM), 1860-1866 (YSPTAPS), 1868-1874 (YSPTSPA), and 1875-1881 (YSPSSPT). Residues 1832–1849 (YSPSSTKYSPTSPTYTPT) show a composition bias toward low complexity. The segment covering 1850–1859 (ARNYSPTSPM) has biased composition (polar residues). Residues 1860–1881 (YSPTAPSHYSPTSPAYSPSSPT) show a composition bias toward low complexity.

The protein belongs to the RNA polymerase beta' chain family. As to quaternary structure, component of the RNA polymerase II (Pol II) complex consisting of 12 subunits. Post-translationally, the tandem 7 residues repeats in the C-terminal domain (CTD) can be highly phosphorylated. The phosphorylation activates Pol II. Phosphorylation occurs mainly at residues 'Ser-2' and 'Ser-5' of the heptapeptide repeat. The phosphorylation state is believed to result from the balanced action of site-specific CTD kinases and phosphatase, and a 'CTD code' that specifies the position of Pol II within the transcription cycle has been proposed. In terms of processing, following transcription stress, the elongating form of RNA polymerase II (RNA pol IIo) is polyubiquitinated via 'Lys-63'-linkages on Lys-1260 at DNA damage sites without leading to degradation: ubiquitination promotes RNA pol IIo backtracking to allow access by the transcription-coupled nucleotide excision repair (TC-NER) machinery. Subsequent DEF1-dependent polyubiquitination by the elongin complex via 'Lys-48'-linkages may lead to proteasome-mediated degradation; presumably at stalled RNA pol II where TC-NER has failed, to halt global transcription and enable 'last resort' DNA repair pathways.

Its subcellular location is the nucleus. It catalyses the reaction RNA(n) + a ribonucleoside 5'-triphosphate = RNA(n+1) + diphosphate. Its function is as follows. DNA-dependent RNA polymerase catalyzes the transcription of DNA into RNA using the four ribonucleoside triphosphates as substrates. Largest and catalytic component of RNA polymerase II which synthesizes mRNA precursors and many functional non-coding RNAs. Forms the polymerase active center together with the second largest subunit. Pol II is the central component of the basal RNA polymerase II transcription machinery. It is composed of mobile elements that move relative to each other. RPB1 is part of the core element with the central large cleft, the clamp element that moves to open and close the cleft and the jaws that are thought to grab the incoming DNA template. At the start of transcription, a single-stranded DNA template strand of the promoter is positioned within the central active site cleft of Pol II. A bridging helix emanates from RPB1 and crosses the cleft near the catalytic site and is thought to promote translocation of Pol II by acting as a ratchet that moves the RNA-DNA hybrid through the active site by switching from straight to bent conformations at each step of nucleotide addition. During transcription elongation, Pol II moves on the template as the transcript elongates. Elongation is influenced by the phosphorylation status of the C-terminal domain (CTD) of Pol II largest subunit (RPB1), which serves as a platform for assembly of factors that regulate transcription initiation, elongation, termination and mRNA processing. This chain is DNA-directed RNA polymerase II subunit RPB1, found in Drosophila melanogaster (Fruit fly).